The chain runs to 284 residues: tRNA N(3)-cytidine methyltransferase METTL6 (284 aa).

Positions 45 and 49 each coordinate S-adenosyl-L-methionine. 8 residues coordinate S-adenosyl-L-homocysteine: Tyr49, His61, Glu85, Gly87, Asp110, Asp136, Leu137, and Ile157. 5 residues coordinate S-adenosyl-L-methionine: Gly87, Asp110, Asp136, Leu137, and Ile157.

The protein belongs to the methyltransferase superfamily. METL family. In terms of assembly, monomer. Interacts with SARS1/SerRS; interaction is mediated via tRNA(Ser) and is required for N(3)-methylcytidine methylation.

The protein localises to the cytoplasm. Its subcellular location is the nucleus. It catalyses the reaction cytidine(32) in tRNA(Ser) + S-adenosyl-L-methionine = N(3)-methylcytidine(32) in tRNA(Ser) + S-adenosyl-L-homocysteine + H(+). Functionally, S-adenosyl-L-methionine-dependent methyltransferase that mediates N(3)-methylcytidine modification of residue 32 of the tRNA anticodon loop of tRNA(Ser), including tRNA(Ser)(UGA) and tRNA(Ser)(GCU). Interaction with SARS1/SerRS is required for N(3)-methylcytidine methylation. This is tRNA N(3)-cytidine methyltransferase METTL6 from Homo sapiens (Human).